Consider the following 361-residue polypeptide: N-methyltransferase benX (361 aa).

It belongs to the methyltransferase superfamily.

Its pathway is secondary metabolite biosynthesis. Its function is as follows. N-methyltransferase; part of the gene cluster that mediates the biosynthesis of benzomalvin A and D. The pathway begins with the loading of amino acid precursors onto the A domains of the non ribosomal peptide synthetases benY and benZ. BenY and the A1 domain of benZ are loaded with anthranilate (Anth), while the A2 domain of benZ is loaded with phenylalanine (Phe). N-methylation of Phe by the methyltransferase benX may happen before loading of Phe onto benZ, after loading of Phe, or after dipeptide formation. Condensation of Anth with the secondary amine of NmPhe or Phe is catalyzed by the C1 domain of benZ, forming a dipeptide intermediate. This is followed by in trans condensation of the Anth-NmPhe dipeptide with Anth bound to the T domain of benY by the C2 domain of benZ to form the linear tripeptide Anth-NmPhe-Anth. Cyclization and release of the tripeptide is then catalyzed by the C-terminal C domain of benY and the resulting 11-member macrocyclic intermediate is expected to spontaneously collapse to form the benzodiazepine core. Benzomalvin A is in conformational equilibrium with its atropisomer, benzomalvin D. The protein is N-methyltransferase benX of Aspergillus terreus.